A 1270-amino-acid polypeptide reads, in one-letter code: Breakpoint cluster region protein (1270 aa).

Position 1 is an N-acetylmethionine (M1). Positions 1-428 (MVDSVGFAEA…DGDSTFQGEA (428 aa)) are kinase. The stretch at 28–55 (VGDIEQELERCKASIRRLEQEVNQERFR) forms a coiled coil. The disordered stretch occupies residues 67 to 173 (KKSYDRQRWG…GPAQPGSADA (107 aa)). The span at 121–139 (GSPSKGRSASARRPAAAAS) shows a compositional bias: low complexity. Phosphoserine is present on residues S122 and S139. Y178 is modified (phosphotyrosine; by HCK). The interval 198 to 387 (SDRISSLGSQ…QSFDSSSPPT (190 aa)) is binding to ABL SH2-domain. Disordered stretches follow at residues 201–249 (ISSL…DYED), 295–396 (KSPL…RHRQ), and 412–481 (TGQI…SGAL). Residues S203, S216, and S237 each carry the phosphoserine modification. Y247 is subject to Phosphotyrosine; by FES. Composition is skewed to low complexity over residues 348–358 (SSGQSSRVSPS) and 371–384 (SPSQNSQQSFDSSS). S358, S379, and S384 each carry phosphoserine. T387 carries the post-translational modification Phosphothreonine. 2 positions are modified to phosphoserine: S461 and S465. An Omega-N-methylarginine modification is found at R473. A phosphoserine mark is found at S475 and S487. The DH domain occupies 497–690 (MRKWVLSGIL…QNFLSSINEE (194 aa)). Y553 carries the post-translational modification Phosphotyrosine. T640 is modified (phosphothreonine). Phosphotyrosine is present on Y643. The residue at position 692 (T692) is a Phosphothreonine. The 159-residue stretch at 707 to 865 (QLLKDSFMVE…WRESIREQQK (159 aa)) folds into the PH domain. Residues 892 to 1019 (HHIPLTINKE…QDRDWQRTVI (128 aa)) enclose the C2 domain. In terms of domain architecture, Rho-GAP spans 1053-1247 (VKIAVVTKRE…VMSQVQVLLY (195 aa)). The residue at position 1263 (S1263) is a Phosphoserine.

As to quaternary structure, homotetramer. Interacts with PDZK1. Interacts with HCK, FES/FPS, ABL1, PIK3R1 and GRB2. May interact with CCPG1. Interacts with SH2D5. Interacts with DLG4. Autophosphorylated. Phosphorylated by FES/FPS on tyrosine residues, leading to down-regulation of the BCR kinase activity. Phosphorylation at Tyr-178 by HCK is important for interaction with GRB2. As to expression, expressed in brain. In hippocampal subregions, most abundant in the CA1 region and expressed at successively lower levels in the dentate gyrus and the CA3 region.

The protein localises to the postsynaptic density. It localises to the cell projection. Its subcellular location is the dendritic spine. The protein resides in the axon. It is found in the synapse. The catalysed reaction is L-seryl-[protein] + ATP = O-phospho-L-seryl-[protein] + ADP + H(+). The enzyme catalyses L-threonyl-[protein] + ATP = O-phospho-L-threonyl-[protein] + ADP + H(+). Its function is as follows. Protein with a unique structure having two opposing regulatory activities toward small GTP-binding proteins. The C-terminus is a GTPase-activating protein (GAP) domain which stimulates GTP hydrolysis by RAC1, RAC2 and CDC42. Accelerates the intrinsic rate of GTP hydrolysis of RAC1 or CDC42, leading to down-regulation of the active GTP-bound form. The central Dbl homology (DH) domain functions as guanine nucleotide exchange factor (GEF) that modulates the GTPases CDC42, RHOA and RAC1. Promotes the conversion of CDC42, RHOA and RAC1 from the GDP-bound to the GTP-bound form. The amino terminus contains an intrinsic kinase activity. Functions as an important negative regulator of neuronal RAC1 activity. Regulates macrophage functions such as CSF1-directed motility and phagocytosis through the modulation of RAC1 activity. Plays a major role as a RHOA GEF in keratinocytes being involved in focal adhesion formation and keratinocyte differentiation. This Mus musculus (Mouse) protein is Breakpoint cluster region protein.